A 238-amino-acid chain; its full sequence is tRNA1(Val) (adenine(37)-N6)-methyltransferase (238 aa).

Belongs to the methyltransferase superfamily. tRNA (adenine-N(6)-)-methyltransferase family.

It localises to the cytoplasm. The catalysed reaction is adenosine(37) in tRNA1(Val) + S-adenosyl-L-methionine = N(6)-methyladenosine(37) in tRNA1(Val) + S-adenosyl-L-homocysteine + H(+). Functionally, specifically methylates the adenine in position 37 of tRNA(1)(Val) (anticodon cmo5UAC). The protein is tRNA1(Val) (adenine(37)-N6)-methyltransferase of Cytophaga hutchinsonii (strain ATCC 33406 / DSM 1761 / CIP 103989 / NBRC 15051 / NCIMB 9469 / D465).